The chain runs to 791 residues: MSRRRHSDENDGGQPHKRRRTSEPLEIEDRLESLICRVGEKSTSSLESNLEGLAGVLEADLPNYKNKILRILCFVARLLPEKMTVYTTLVGLLNARNYNFGGEFVEAMIRHLKETIKLNAYNEAIYLVRFLCDLVNCHVIAAPSMVAMFESFVGVTQEEDIPQVRSDWYVYAVLSSLPWVGKELYEKKDVEMDQILSQIEAYLKQRQKLHLSILQVWSAEKPHPQEEYLDCLWAQVQKLKKDRWQERHIQRPYLAFDSVLCEALQHNLPPFTPPPHTEDSVYPVPRVIFRMFDYTDAPEGPVMPGSHSVERFVIEENLHCILKSHWRERKTCAAQLLSYPEKNKIPLNYHIVEVIFGELFQLPSPPQIDVMYTTLLIELCKLQPGSLPQVLAQASEMLYTRLDTMNTTCIDRFINWFSHHLSNFQFRWNWEDWADCLSQDLDKPKPQFVREVLEKCMRLSYHQRILDIVPATFSALYPANPSNVIKYGDESNSALPGYSVAVILTNAIKNKASDKEIFNILKDIPNPNQDDYDDEGIGFNPLKIEVFVQTLLNLASKSFSHSFSALAKFHDIFKALSESDEGKLHILRVVYDVWKNHPQMIAVLLDKMIRTQIVDCAAVANWIFSPELSPDFTRFYIWEILHSTIRKMNKHVQKIQKELEDTKQRLAKQHKHRDSDDNDEDSGRKDGPLEEQIERLQEKVESAQSEQKNLFLVIFQRFIMILTEHLVRCETGGIDVNTAWYKNCRERLQQIFLQHHQTIQQYMVTLENLLFTAELDHHILTVFQQFCALQS.

The tract at residues methionine 1–proline 24 is disordered. The MIF4G domain occupies glutamate 28–lysine 240. A coiled-coil region spans residues leucine 641 to isoleucine 714. The tract at residues glutamine 664–glycine 687 is disordered.

The protein belongs to the NCBP1 family. Component of the nuclear cap-binding complex (CBC), a heterodimer composed of ncbp1/cbp80 and ncbp2/cbp20 that interacts with m7GpppG-capped RNA. Component of an alternative nuclear cap-binding complex (CBC) composed of ncbp1/cbp80 and ncbp3.

It localises to the nucleus. It is found in the cytoplasm. Component of the cap-binding complex (CBC), which binds cotranscriptionally to the 5'-cap of pre-mRNAs and is involved in various processes such as pre-mRNA splicing, translation regulation, nonsense-mediated mRNA decay, RNA-mediated gene silencing (RNAi) by microRNAs (miRNAs) and mRNA export. The CBC complex is involved in mRNA export from the nucleus, leading to the recruitment of the mRNA export machinery to the 5'-end of mRNA and to mRNA export in a 5' to 3' direction through the nuclear pore. The CBC complex is also involved in mediating U snRNA and intronless mRNAs export from the nucleus. The CBC complex is essential for a pioneer round of mRNA translation, before steady state translation when the CBC complex is replaced by cytoplasmic cap-binding protein eIF4E. The pioneer round of mRNA translation mediated by the CBC complex plays a central role in nonsense-mediated mRNA decay (NMD), NMD only taking place in mRNAs bound to the CBC complex, but not on eIF4E-bound mRNAs. The CBC complex enhances NMD in mRNAs containing at least one exon-junction complex (EJC), promoting the interaction between UPF1 and UPF2. The CBC complex is also involved in 'failsafe' NMD, which is independent of the EJC complex, while it does not participate in Staufen-mediated mRNA decay (SMD). During cell proliferation, the CBC complex is also involved in microRNAs (miRNAs) biogenesis via its interaction with SRRT/ARS2 and is required for miRNA-mediated RNA interference. The CBC complex also acts as a negative regulator of parn, thereby acting as an inhibitor of mRNA deadenylation. In the CBC complex, NCBP1/CBP80 does not bind directly capped RNAs (m7GpppG-capped RNA) but is required to stabilize the movement of the N-terminal loop of NCBP2/CBP20 and lock the CBC into a high affinity cap-binding state with the cap structure. Associates with NCBP3 to form an alternative cap-binding complex (CBC) which plays a key role in mRNA export. The conventional CBC with NCBP2 binds both small nuclear RNA (snRNA) and messenger (mRNA) and is involved in their export from the nucleus whereas the alternative CBC with NCBP3 does not bind snRNA and associates only with mRNA thereby playing a role only in mRNA export. This Xenopus laevis (African clawed frog) protein is Nuclear cap-binding protein subunit 1-B (ncbp1-b).